Consider the following 235-residue polypeptide: Large ribosomal subunit protein uL1 (235 aa).

The protein belongs to the universal ribosomal protein uL1 family. Part of the 50S ribosomal subunit.

Binds directly to 23S rRNA. The L1 stalk is quite mobile in the ribosome, and is involved in E site tRNA release. Its function is as follows. Protein L1 is also a translational repressor protein, it controls the translation of the L11 operon by binding to its mRNA. This Prochlorococcus marinus subsp. pastoris (strain CCMP1986 / NIES-2087 / MED4) protein is Large ribosomal subunit protein uL1.